A 428-amino-acid chain; its full sequence is Enolase (428 aa).

Residue Q162 coordinates (2R)-2-phosphoglycerate. E204 acts as the Proton donor in catalysis. 3 residues coordinate Mg(2+): D241, E282, and D309. Residues K334, R363, S364, and K385 each coordinate (2R)-2-phosphoglycerate. Catalysis depends on K334, which acts as the Proton acceptor.

The protein belongs to the enolase family. Requires Mg(2+) as cofactor.

It is found in the cytoplasm. It localises to the secreted. The protein resides in the cell surface. It catalyses the reaction (2R)-2-phosphoglycerate = phosphoenolpyruvate + H2O. Its pathway is carbohydrate degradation; glycolysis; pyruvate from D-glyceraldehyde 3-phosphate: step 4/5. Its function is as follows. Catalyzes the reversible conversion of 2-phosphoglycerate (2-PG) into phosphoenolpyruvate (PEP). It is essential for the degradation of carbohydrates via glycolysis. This Mycobacterium marinum (strain ATCC BAA-535 / M) protein is Enolase.